Here is a 588-residue protein sequence, read N- to C-terminus: Adenine deaminase (588 aa).

The protein belongs to the metallo-dependent hydrolases superfamily. Adenine deaminase family. In terms of assembly, homodimer. Mn(2+) is required as a cofactor.

It catalyses the reaction adenine + H2O + H(+) = hypoxanthine + NH4(+). The polypeptide is Adenine deaminase (Shigella boydii serotype 4 (strain Sb227)).